A 103-amino-acid polypeptide reads, in one-letter code: UPF0145 protein CYB_1351 (103 aa).

This sequence belongs to the UPF0145 family.

The chain is UPF0145 protein CYB_1351 from Synechococcus sp. (strain JA-2-3B'a(2-13)) (Cyanobacteria bacterium Yellowstone B-Prime).